The primary structure comprises 431 residues: Glutamate-1-semialdehyde 2,1-aminomutase (431 aa).

Position 269 is an N6-(pyridoxal phosphate)lysine (lysine 269).

This sequence belongs to the class-III pyridoxal-phosphate-dependent aminotransferase family. HemL subfamily. As to quaternary structure, homodimer. Requires pyridoxal 5'-phosphate as cofactor.

The protein localises to the cytoplasm. It carries out the reaction (S)-4-amino-5-oxopentanoate = 5-aminolevulinate. It participates in porphyrin-containing compound metabolism; protoporphyrin-IX biosynthesis; 5-aminolevulinate from L-glutamyl-tRNA(Glu): step 2/2. The protein operates within porphyrin-containing compound metabolism; chlorophyll biosynthesis. The protein is Glutamate-1-semialdehyde 2,1-aminomutase of Chlorobium phaeobacteroides (strain BS1).